The sequence spans 300 residues: 33 kDa chaperonin (300 aa).

Intrachain disulfides connect Cys235-Cys237 and Cys269-Cys272.

This sequence belongs to the HSP33 family. In terms of processing, under oxidizing conditions two disulfide bonds are formed involving the reactive cysteines. Under reducing conditions zinc is bound to the reactive cysteines and the protein is inactive.

It localises to the cytoplasm. Redox regulated molecular chaperone. Protects both thermally unfolding and oxidatively damaged proteins from irreversible aggregation. Plays an important role in the bacterial defense system toward oxidative stress. This Pseudomonas savastanoi pv. phaseolicola (strain 1448A / Race 6) (Pseudomonas syringae pv. phaseolicola (strain 1448A / Race 6)) protein is 33 kDa chaperonin.